Here is a 418-residue protein sequence, read N- to C-terminus: Galactooligosaccharides transport system permease protein GanP (418 aa).

9 helical membrane passes run 25–45 (IKGIVFLFLGASFFAVFGDLL), 65–85 (VFLLAEGIIAVIVTCFGLAVY), 129–149 (LFILIFAVIFPILFSFALAFT), 191–211 (VVWTLAASTLQVTLGIFLAII), 226–246 (ILILPWAVPGFVTILIFAGLF), 279–299 (LILMQGWLGFPYIFLVSTGVL), 323–343 (YITLPMVFIAMAPIIITQFTF), 357–379 (GGPAVTGSTAGGTDILVSWIYKL), and 388–408 (LAAALTILLSVFVISIALWQF). Residues 187–407 (LAWTVVWTLA…VFVISIALWQ (221 aa)) form the ABC transmembrane type-1 domain.

Belongs to the binding-protein-dependent transport system permease family. The complex is composed of two ATP-binding proteins (MsmX), two transmembrane proteins (GanP and GanQ) and a solute-binding protein (GanS).

The protein localises to the cell membrane. In terms of biological role, involved in galactan degradation. Part of the ABC transporter complex GanPQS involved in the uptake of galactooligosaccharides. Responsible for the translocation of the substrate across the membrane. The sequence is that of Galactooligosaccharides transport system permease protein GanP (ganP) from Bacillus subtilis (strain 168).